Here is a 335-residue protein sequence, read N- to C-terminus: MRFNEQADGVIILDQTLLPGKEAYLTLTTAEEIWDAIYKLKVRGAPAIGVAAAYGIYVCARRIDTAEKSVFVNEFRKIKEYLAGSRPTAVNLVAALNRMERVLVAHPTLSVPEWKELLYKEAIAIREEDAAACRQIGENCLELLRPGMGILTHCNAGHLAVSEYGTALAPIYLGQERGYGFKVFADETRPLLQGARLTAYELSRAGVDVTLICDNMASVVMRKGWVHAVVVGCDRVAANGDVANKIGTSGVAILARHYKIPFYVLGPTSTIDGSCPDGDSIVIEERNPDEVTEMWYSRRMAPKDVKVYNPAFDITPHELITAIITEKGIFYKNNR.

Substrate contacts are provided by residues 43 to 45 (RGA), R86, and Q193. D234 (proton donor) is an active-site residue. 244-245 (NK) is a substrate binding site.

This sequence belongs to the eIF-2B alpha/beta/delta subunits family. MtnA subfamily.

The catalysed reaction is 5-(methylsulfanyl)-alpha-D-ribose 1-phosphate = 5-(methylsulfanyl)-D-ribulose 1-phosphate. The protein operates within amino-acid biosynthesis; L-methionine biosynthesis via salvage pathway; L-methionine from S-methyl-5-thio-alpha-D-ribose 1-phosphate: step 1/6. In terms of biological role, catalyzes the interconversion of methylthioribose-1-phosphate (MTR-1-P) into methylthioribulose-1-phosphate (MTRu-1-P). The sequence is that of Methylthioribose-1-phosphate isomerase from Parabacteroides distasonis (strain ATCC 8503 / DSM 20701 / CIP 104284 / JCM 5825 / NCTC 11152).